The following is a 292-amino-acid chain: GTP cyclohydrolase FolE2 (292 aa).

Belongs to the GTP cyclohydrolase IV family.

It carries out the reaction GTP + H2O = 7,8-dihydroneopterin 3'-triphosphate + formate + H(+). Its pathway is cofactor biosynthesis; 7,8-dihydroneopterin triphosphate biosynthesis; 7,8-dihydroneopterin triphosphate from GTP: step 1/1. Its function is as follows. Converts GTP to 7,8-dihydroneopterin triphosphate. The polypeptide is GTP cyclohydrolase FolE2 (Staphylococcus epidermidis (strain ATCC 35984 / DSM 28319 / BCRC 17069 / CCUG 31568 / BM 3577 / RP62A)).